Here is a 176-residue protein sequence, read N- to C-terminus: ATP-dependent protease subunit HslV (176 aa).

Threonine 2 is a catalytic residue. Na(+) contacts are provided by glycine 157, cysteine 160, and threonine 163.

The protein belongs to the peptidase T1B family. HslV subfamily. As to quaternary structure, a double ring-shaped homohexamer of HslV is capped on each side by a ring-shaped HslU homohexamer. The assembly of the HslU/HslV complex is dependent on binding of ATP.

The protein resides in the cytoplasm. The enzyme catalyses ATP-dependent cleavage of peptide bonds with broad specificity.. With respect to regulation, allosterically activated by HslU binding. Its function is as follows. Protease subunit of a proteasome-like degradation complex believed to be a general protein degrading machinery. This is ATP-dependent protease subunit HslV from Pectobacterium atrosepticum (strain SCRI 1043 / ATCC BAA-672) (Erwinia carotovora subsp. atroseptica).